The sequence spans 535 residues: Putative beta-glucosidase 41 (535 aa).

The signal sequence occupies residues methionine 1–serine 27. A beta-D-glucoside is bound at residue glutamine 49. Asparagine 118 carries an N-linked (GlcNAc...) asparagine glycan. A beta-D-glucoside-binding positions include histidine 151 and asparagine 196 to glutamate 197. The active-site Proton donor is the glutamate 197. Cysteine 216 and cysteine 224 are oxidised to a cystine. Tyrosine 340 and glutamate 413 together coordinate a beta-D-glucoside. Residue glutamate 413 is the Nucleophile of the active site. N-linked (GlcNAc...) asparagine glycosylation occurs at asparagine 445. Residues tryptophan 463, glutamate 470–tryptophan 471, and phenylalanine 479 contribute to the a beta-D-glucoside site. Asparagine 489 carries an N-linked (GlcNAc...) asparagine glycan.

The protein belongs to the glycosyl hydrolase 1 family.

The enzyme catalyses Hydrolysis of terminal, non-reducing beta-D-glucosyl residues with release of beta-D-glucose.. The chain is Putative beta-glucosidase 41 from Arabidopsis thaliana (Mouse-ear cress).